The following is a 106-amino-acid chain: UPF0145 protein Dhaf_3855 (106 aa).

This sequence belongs to the UPF0145 family.

The polypeptide is UPF0145 protein Dhaf_3855 (Desulfitobacterium hafniense (strain DSM 10664 / DCB-2)).